The chain runs to 239 residues: Ribonuclease PH (239 aa).

Phosphate-binding positions include arginine 86 and 124-126 (GTR).

This sequence belongs to the RNase PH family. In terms of assembly, homohexameric ring arranged as a trimer of dimers.

It carries out the reaction tRNA(n+1) + phosphate = tRNA(n) + a ribonucleoside 5'-diphosphate. Its function is as follows. Phosphorolytic 3'-5' exoribonuclease that plays an important role in tRNA 3'-end maturation. Removes nucleotide residues following the 3'-CCA terminus of tRNAs; can also add nucleotides to the ends of RNA molecules by using nucleoside diphosphates as substrates, but this may not be physiologically important. Probably plays a role in initiation of 16S rRNA degradation (leading to ribosome degradation) during starvation. The sequence is that of Ribonuclease PH from Rickettsia felis (strain ATCC VR-1525 / URRWXCal2) (Rickettsia azadi).